The chain runs to 467 residues: Bifunctional protein GlmU (467 aa).

Residues Met-1–Arg-229 form a pyrophosphorylase region. UDP-N-acetyl-alpha-D-glucosamine-binding positions include Leu-8–Gly-11, Lys-22, Gln-72, Gly-77–Thr-78, Ser-100–Asp-102, Gly-139, Glu-154, Asn-169, and Asn-227. Asp-102 contributes to the Mg(2+) binding site. Asn-227 serves as a coordination point for Mg(2+). The tract at residues Leu-230 to Asn-250 is linker. The interval Gly-251 to Lys-467 is N-acetyltransferase. UDP-N-acetyl-alpha-D-glucosamine contacts are provided by Arg-332 and Lys-350. His-362 acts as the Proton acceptor in catalysis. Tyr-365 and Asn-376 together coordinate UDP-N-acetyl-alpha-D-glucosamine. Residues Asn-385–Tyr-386, Ser-404, Ala-422, and Arg-439 contribute to the acetyl-CoA site.

It in the N-terminal section; belongs to the N-acetylglucosamine-1-phosphate uridyltransferase family. This sequence in the C-terminal section; belongs to the transferase hexapeptide repeat family. Homotrimer. The cofactor is Mg(2+).

The protein resides in the cytoplasm. The catalysed reaction is alpha-D-glucosamine 1-phosphate + acetyl-CoA = N-acetyl-alpha-D-glucosamine 1-phosphate + CoA + H(+). It catalyses the reaction N-acetyl-alpha-D-glucosamine 1-phosphate + UTP + H(+) = UDP-N-acetyl-alpha-D-glucosamine + diphosphate. It participates in nucleotide-sugar biosynthesis; UDP-N-acetyl-alpha-D-glucosamine biosynthesis; N-acetyl-alpha-D-glucosamine 1-phosphate from alpha-D-glucosamine 6-phosphate (route II): step 2/2. Its pathway is nucleotide-sugar biosynthesis; UDP-N-acetyl-alpha-D-glucosamine biosynthesis; UDP-N-acetyl-alpha-D-glucosamine from N-acetyl-alpha-D-glucosamine 1-phosphate: step 1/1. The protein operates within bacterial outer membrane biogenesis; LPS lipid A biosynthesis. Catalyzes the last two sequential reactions in the de novo biosynthetic pathway for UDP-N-acetylglucosamine (UDP-GlcNAc). The C-terminal domain catalyzes the transfer of acetyl group from acetyl coenzyme A to glucosamine-1-phosphate (GlcN-1-P) to produce N-acetylglucosamine-1-phosphate (GlcNAc-1-P), which is converted into UDP-GlcNAc by the transfer of uridine 5-monophosphate (from uridine 5-triphosphate), a reaction catalyzed by the N-terminal domain. This is Bifunctional protein GlmU from Pediococcus pentosaceus (strain ATCC 25745 / CCUG 21536 / LMG 10740 / 183-1w).